A 314-amino-acid chain; its full sequence is NADH-ubiquinone oxidoreductase chain 2 (314 aa).

9 helical membrane-spanning segments follow: residues 13–35, 61–80, 85–107, 117–139, 144–166, 189–209, 224–244, 246–266, and 294–314; these read LGVMLIGTILSVSSEELVGVWLG, YFVVQSTGSILMLVGFVSLM, VSGLVMSTAXTVLKSGVFPLHSW, WLASGLMLTWQKVAPLVFLSMIL, LWVVIVSMAGIGAVGGLNQNSVR, VVFVGYFAVYSLSVGLFFYGC, AASGMGLLMLMGMPPFLGFLA, VLVFLMSGSPVIVACIMGSVI, and IWSLVICMNIMGGALILVSFI.

The protein belongs to the complex I subunit 2 family.

The protein resides in the mitochondrion inner membrane. It catalyses the reaction a ubiquinone + NADH + 5 H(+)(in) = a ubiquinol + NAD(+) + 4 H(+)(out). Functionally, core subunit of the mitochondrial membrane respiratory chain NADH dehydrogenase (Complex I) that is believed to belong to the minimal assembly required for catalysis. Complex I functions in the transfer of electrons from NADH to the respiratory chain. The immediate electron acceptor for the enzyme is believed to be ubiquinone. This chain is NADH-ubiquinone oxidoreductase chain 2 (ND2), found in Mytilus edulis (Blue mussel).